Reading from the N-terminus, the 316-residue chain is HPr kinase/phosphorylase (316 aa).

Active-site residues include His146 and Lys167. Position 161–168 (161–168 (GESGLGKS)) interacts with ATP. Ser168 provides a ligand contact to Mg(2+). The active-site Proton acceptor; for phosphorylation activity. Proton donor; for dephosphorylation activity is Asp185. The tract at residues 209–218 (LEVRGIGLLD) is important for the catalytic mechanism of both phosphorylation and dephosphorylation. Glu210 lines the Mg(2+) pocket. Arg252 is a catalytic residue. The segment at 273–278 (QVEAGR) is important for the catalytic mechanism of dephosphorylation.

The protein belongs to the HPrK/P family. As to quaternary structure, homohexamer. Mg(2+) is required as a cofactor.

The enzyme catalyses [HPr protein]-L-serine + ATP = [HPr protein]-O-phospho-L-serine + ADP + H(+). It catalyses the reaction [HPr protein]-O-phospho-L-serine + phosphate + H(+) = [HPr protein]-L-serine + diphosphate. In terms of biological role, catalyzes the ATP- as well as the pyrophosphate-dependent phosphorylation of a specific serine residue in HPr, a phosphocarrier protein of the phosphoenolpyruvate-dependent sugar phosphotransferase system (PTS). HprK/P also catalyzes the pyrophosphate-producing, inorganic phosphate-dependent dephosphorylation (phosphorolysis) of seryl-phosphorylated HPr (P-Ser-HPr). In Polaromonas sp. (strain JS666 / ATCC BAA-500), this protein is HPr kinase/phosphorylase.